Reading from the N-terminus, the 255-residue chain is MMRVKHIAVGSRLLPLSFECKDGEVVHVVGPNGSGKSTLLAAISGTLTGRDGASGEVHVDDKNLLTLSLSEQAHVRGYLCQQSRPAFNVDVFQYLALSLPSGTAITDGKVRDAVNMVVELVQLQDKLHRSIQTLSGGEWQRVRLAGVCLQVWRTINPYSQLLILDEPAAPLDIAQEGLLYQLINAIAAQGIGVLVANHDLNRTLKHADKVLLLSNGVLHSSGRADDVLSEAGLAEVFKTQARKVMIDERPYLIFD.

One can recognise an ABC transporter domain in the interval 2–240; the sequence is MRVKHIAVGS…AGLAEVFKTQ (239 aa). 30–37 serves as a coordination point for ATP; the sequence is GPNGSGKS.

The protein belongs to the ABC transporter superfamily. Vitamin B12 importer (TC 3.A.1.13.1) family. The complex is composed of two ATP-binding proteins (BtuD), two transmembrane proteins (BtuC) and a solute-binding protein (BtuF).

It localises to the cell inner membrane. The enzyme catalyses an R-cob(III)alamin(out) + ATP + H2O = an R-cob(III)alamin(in) + ADP + phosphate + H(+). Part of the ABC transporter complex BtuCDF involved in vitamin B12 import. Responsible for energy coupling to the transport system. The protein is Vitamin B12 import ATP-binding protein BtuD of Vibrio parahaemolyticus serotype O3:K6 (strain RIMD 2210633).